Here is a 144-residue protein sequence, read N- to C-terminus: Transcriptional regulator MraZ (144 aa).

SpoVT-AbrB domains follow at residues 5–47 (TYTP…PRAE) and 77–120 (TDEQ…DAQA).

This sequence belongs to the MraZ family. As to quaternary structure, forms oligomers.

It localises to the cytoplasm. It is found in the nucleoid. This chain is Transcriptional regulator MraZ, found in Mycolicibacterium gilvum (strain PYR-GCK) (Mycobacterium gilvum (strain PYR-GCK)).